The primary structure comprises 57 residues: UPF0391 membrane protein Smed_4051 (57 aa).

The next 2 membrane-spanning stretches (helical) occupy residues Trp-4–Ser-24 and Ile-33–Gly-53.

It belongs to the UPF0391 family.

The protein resides in the cell membrane. This chain is UPF0391 membrane protein Smed_4051, found in Sinorhizobium medicae (strain WSM419) (Ensifer medicae).